The chain runs to 103 residues: Large ribosomal subunit protein bL36m (103 aa).

Belongs to the bacterial ribosomal protein bL36 family. As to quaternary structure, component of the mitochondrial large ribosomal subunit (mt-LSU). Mature mammalian 55S mitochondrial ribosomes consist of a small (28S) and a large (39S) subunit. The 28S small subunit contains a 12S ribosomal RNA (12S mt-rRNA) and 30 different proteins. The 39S large subunit contains a 16S rRNA (16S mt-rRNA), a copy of mitochondrial valine transfer RNA (mt-tRNA(Val)), which plays an integral structural role, and 52 different proteins. bL36m has a zinc binding site.

It is found in the mitochondrion. The chain is Large ribosomal subunit protein bL36m (MRPL36) from Homo sapiens (Human).